We begin with the raw amino-acid sequence, 463 residues long: Probable ECA polymerase (463 aa).

The next 11 helical transmembrane spans lie at 6 to 26 (FGGLFVVYLISVIFILSLTWM), 39 to 59 (FSLLYLLTFYFGFPFTCVLVF), 65 to 85 (VVPVQYLLQAMLSATAFYAVY), 112 to 132 (ANLTWLLLALIAVATVGIFFL), 154 to 174 (GVALKRFFYFFIPAMLVVYFL), 180 to 200 (AWLLFLIGTVAFGMLTYVIVG), 201 to 221 (GTRANLIIAFALFLFIGIVRG), 222 to 242 (WITLWMLVAAGIFGIVGMFWL), 340 to 360 (LVVMGGVLFIPLGAIAVGLVI), 377 to 397 (YKAAILQAFCFGAVFNIIVLT), and 408 to 428 (VVFFCLIFGLCLLVAKLLYWL).

It belongs to the WzyE family. As to quaternary structure, probably part of a complex composed of WzxE, WzyE and WzzE.

Its subcellular location is the cell inner membrane. It functions in the pathway bacterial outer membrane biogenesis; enterobacterial common antigen biosynthesis. In terms of biological role, probably involved in the polymerization of enterobacterial common antigen (ECA) trisaccharide repeat units. This Pectobacterium atrosepticum (strain SCRI 1043 / ATCC BAA-672) (Erwinia carotovora subsp. atroseptica) protein is Probable ECA polymerase.